The sequence spans 379 residues: Galactose-1-phosphate uridylyltransferase (379 aa).

The segment covering 1-15 has biased composition (polar residues); that stretch reads MSQSGADPEQRQQAS. Residues 1-20 are disordered; sequence MSQSGADPEQRQQASEADAM. Cysteine 75 lines the Zn(2+) pocket. Residues alanine 81, 97-98, and asparagine 173 contribute to the UDP-alpha-D-glucose site; that span reads ND. Residue histidine 184 coordinates Zn(2+). The active-site Tele-UMP-histidine intermediate is the histidine 186. Glutamine 188 contacts UDP-alpha-D-glucose. 4 residues coordinate Zn(2+): glutamate 202, histidine 301, histidine 319, and histidine 321. UDP-alpha-D-glucose-binding positions include 334–337 and 339–340; these read KFMV and YE.

It belongs to the galactose-1-phosphate uridylyltransferase type 1 family. In terms of assembly, homodimer. Zn(2+) is required as a cofactor.

The enzyme catalyses alpha-D-galactose 1-phosphate + UDP-alpha-D-glucose = alpha-D-glucose 1-phosphate + UDP-alpha-D-galactose. The protein operates within carbohydrate metabolism; galactose metabolism. Plays an important role in galactose metabolism. The protein is Galactose-1-phosphate uridylyltransferase (Galt) of Rattus norvegicus (Rat).